Here is a 495-residue protein sequence, read N- to C-terminus: UDP-N-acetylmuramoyl-L-alanyl-D-glutamate--2,6-diaminopimelate ligase (495 aa).

Residues leucine 27, serine 29, and 44–46 (HQT) each bind UDP-N-acetyl-alpha-D-muramoyl-L-alanyl-D-glutamate. 116-122 (GTNGKTT) is an ATP binding site. UDP-N-acetyl-alpha-D-muramoyl-L-alanyl-D-glutamate contacts are provided by residues asparagine 157, 158 to 159 (TT), serine 185, glutamine 191, and arginine 193. Lysine 225 carries the N6-carboxylysine modification. Meso-2,6-diaminopimelate contacts are provided by residues arginine 390, 414 to 417 (DNPR), glycine 465, and glutamate 469. Positions 414 to 417 (DNPR) match the Meso-diaminopimelate recognition motif motif.

It belongs to the MurCDEF family. MurE subfamily. The cofactor is Mg(2+). Post-translationally, carboxylation is probably crucial for Mg(2+) binding and, consequently, for the gamma-phosphate positioning of ATP.

The protein resides in the cytoplasm. It carries out the reaction UDP-N-acetyl-alpha-D-muramoyl-L-alanyl-D-glutamate + meso-2,6-diaminopimelate + ATP = UDP-N-acetyl-alpha-D-muramoyl-L-alanyl-gamma-D-glutamyl-meso-2,6-diaminopimelate + ADP + phosphate + H(+). It participates in cell wall biogenesis; peptidoglycan biosynthesis. Catalyzes the addition of meso-diaminopimelic acid to the nucleotide precursor UDP-N-acetylmuramoyl-L-alanyl-D-glutamate (UMAG) in the biosynthesis of bacterial cell-wall peptidoglycan. In Photorhabdus laumondii subsp. laumondii (strain DSM 15139 / CIP 105565 / TT01) (Photorhabdus luminescens subsp. laumondii), this protein is UDP-N-acetylmuramoyl-L-alanyl-D-glutamate--2,6-diaminopimelate ligase.